A 279-amino-acid chain; its full sequence is NAD kinase (279 aa).

Aspartate 57 serves as the catalytic Proton acceptor. Residues 57-58, 133-134, arginine 159, aspartate 161, and 172-177 contribute to the NAD(+) site; these read DG, NE, and TAYNKS.

Belongs to the NAD kinase family. The cofactor is a divalent metal cation.

The protein localises to the cytoplasm. The catalysed reaction is NAD(+) + ATP = ADP + NADP(+) + H(+). Its function is as follows. Involved in the regulation of the intracellular balance of NAD and NADP, and is a key enzyme in the biosynthesis of NADP. Catalyzes specifically the phosphorylation on 2'-hydroxyl of the adenosine moiety of NAD to yield NADP. This Streptococcus pyogenes serotype M2 (strain MGAS10270) protein is NAD kinase.